The following is a 173-amino-acid chain: Photosystem I assembly protein Ycf3 (173 aa).

TPR repeat units follow at residues 35–68 (AFAY…EDDP), 72–105 (SYIL…NPRM), and 120–153 (GEKA…APNN).

The protein belongs to the Ycf3 family.

It is found in the cellular thylakoid membrane. Functionally, essential for the assembly of the photosystem I (PSI) complex. May act as a chaperone-like factor to guide the assembly of the PSI subunits. The polypeptide is Photosystem I assembly protein Ycf3 (Picosynechococcus sp. (strain ATCC 27264 / PCC 7002 / PR-6) (Agmenellum quadruplicatum)).